The following is a 658-amino-acid chain: UvrABC system protein B (658 aa).

A Helicase ATP-binding domain is found at 25 to 178; sequence KSLKNKNHYQ…KSFLLKLVEM (154 aa). Residue 38–45 coordinates ATP; that stretch reads GVTGSGKT. Positions 91–114 match the Beta-hairpin motif; that stretch reads HFDYYQPESYIPRRDLFIEKDSSI. Residues 433–607 enclose the Helicase C-terminal domain; it reads QVQDLFDEIK…ELKLRDDETK (175 aa). The 36-residue stretch at 623–658 folds into the UVR domain; it reads EKIIKELDKKMRECAKNLDFEEAMHLRDEIAKLRTL.

The protein belongs to the UvrB family. Forms a heterotetramer with UvrA during the search for lesions. Interacts with UvrC in an incision complex.

The protein resides in the cytoplasm. Its function is as follows. The UvrABC repair system catalyzes the recognition and processing of DNA lesions. A damage recognition complex composed of 2 UvrA and 2 UvrB subunits scans DNA for abnormalities. Upon binding of the UvrA(2)B(2) complex to a putative damaged site, the DNA wraps around one UvrB monomer. DNA wrap is dependent on ATP binding by UvrB and probably causes local melting of the DNA helix, facilitating insertion of UvrB beta-hairpin between the DNA strands. Then UvrB probes one DNA strand for the presence of a lesion. If a lesion is found the UvrA subunits dissociate and the UvrB-DNA preincision complex is formed. This complex is subsequently bound by UvrC and the second UvrB is released. If no lesion is found, the DNA wraps around the other UvrB subunit that will check the other stand for damage. The protein is UvrABC system protein B of Helicobacter acinonychis (strain Sheeba).